Here is a 614-residue protein sequence, read N- to C-terminus: V-type proton ATPase catalytic subunit A (614 aa).

Gly247 to Thr254 contacts ATP.

Belongs to the ATPase alpha/beta chains family. As to quaternary structure, V-ATPase is a heteromultimeric enzyme made up of two complexes: the ATP-hydrolytic V1 complex and the proton translocation V0 complex. The V1 complex consists of three catalytic AB heterodimers that form a heterohexamer, three peripheral stalks each consisting of EG heterodimers, one central rotor including subunits D and F, and the regulatory subunits C and H. The proton translocation complex V0 consists of the proton transport subunit a, a ring of proteolipid subunits c9c'', rotary subunit d, subunits e and f, and the accessory subunits VhaAC45 and ATP6AP2.

The enzyme catalyses ATP + H2O + 4 H(+)(in) = ADP + phosphate + 5 H(+)(out). Its activity is regulated as follows. ATP hydrolysis occurs at the interface between the nucleotide-binding domains of subunits A and B. ATP hydrolysis triggers a conformational change in the subunits D and F, which induces a shift of subunit d. The c-ring is subsequently rotated and results in a continuous proton translocation across the membrane. Its function is as follows. Catalytic subunit of the V1 complex of vacuolar(H+)-ATPase (V-ATPase), a multisubunit enzyme composed of a peripheral complex (V1) that hydrolyzes ATP and a membrane integral complex (V0) that translocates protons. V-ATPase is responsible for acidifying and maintaining the pH of intracellular compartments and in some cell types, is targeted to the plasma membrane, where it is responsible for acidifying the extracellular environment. In Anopheles gambiae (African malaria mosquito), this protein is V-type proton ATPase catalytic subunit A.